Consider the following 324-residue polypeptide: Antihemorrhagic factor cMSF (324 aa).

The first 19 residues, 1 to 19 (MHFLVALVLLGQIIGSTLS), serve as a signal peptide directing secretion. Cystatin fetuin-A-type domains are found at residues 22-130 (VRGD…VKCH) and 141-254 (RNCL…SDCV). The Cell attachment site motif lies at 23–25 (RGD). Cystine bridges form between C28–C315, C85–C96, C110–C129, C143–C146, C205–C217, C230–C253, and C287–C291. Residue N204 is glycosylated (N-linked (GlcNAc...) asparagine). N-linked (GlcNAc...) asparagine glycosylation is present at N282.

In terms of assembly, homodimer. In terms of tissue distribution, expressed by the liver.

The protein resides in the secreted. Its function is as follows. Suppress hemorrhage induced by metalloproteinases from the same venom (brevilysin-H3, -H4, -H6) and from habu venom (metalloproteinases HR1A and HR1B). The non-hemorrhagic brevilysin-L4 is not inhibited by cMSF. Does not inhibit serine and cysteine proteases such as trypsin, chymotrypsin, thermolysin, and papain. The inhibition may occur by formation of a non-covalent complex between this protein and the proteinases at their metalloproteinase domains. This is Antihemorrhagic factor cMSF from Gloydius brevicauda (Korean slamosa snake).